The primary structure comprises 345 residues: MLQALKESKDFLQLTLAQPQHFDETFTFMLGSHTQVEVWDTGVIVFEPKVARGKDIVLSCAVHGNETAPIELCNGLIKSLLEERLIAEQRVLFLFGNPPAIINGTRFIDENLNRLFNGAHSVGEGLVNPERIRAKKLEFYVDKFFSSSKDNSHKIHYDLHTAIRGSKHEKFAIYPYRPGRKYSGEQIMFLEACGIDTVLFHHEPTTTFSYFSSLNYQADAFTIELGKVLPMGQNDMTRFIALNEMLSRLIGNKSLELPDFNAKTVNLYQVCRAINKGFDDFEFTFANDVENFTSFPKGYILAKEGGENIKVEHEVEAIVFPNAKVPVGQRTVLCLKPASTENIDG.

Residues H63, E66, and H160 each coordinate Zn(2+). The active site involves E224.

It belongs to the AspA/AstE family. Succinylglutamate desuccinylase subfamily. It depends on Zn(2+) as a cofactor.

The enzyme catalyses N-succinyl-L-glutamate + H2O = L-glutamate + succinate. Its pathway is amino-acid degradation; L-arginine degradation via AST pathway; L-glutamate and succinate from L-arginine: step 5/5. Transforms N(2)-succinylglutamate into succinate and glutamate. This chain is Succinylglutamate desuccinylase, found in Shewanella woodyi (strain ATCC 51908 / MS32).